A 225-amino-acid polypeptide reads, in one-letter code: Zinc finger protein 22 (225 aa).

The disordered stretch occupies residues 1-35 (MRLGKPKGGISRSSSQGKVYENQRKTGRQRQRWGM). Lys18 carries the post-translational modification N6-acetyllysine. 5 consecutive C2H2-type zinc fingers follow at residues 55–77 (YKCVECEKSFSQSSTLFQHQKIH), 83–105 (HKCADCGKSFFQSSNLIQHRRVH), 111–133 (YRCDECGERFKQSSNLIQHQRIH), 139–161 (YQCDECGRCFSQSSHLIQHQRTH), and 167–189 (YQCSECGKCFSQSSHLRQHTKVH). A disordered region spans residues 183–225 (RQHTKVHEEEKPRKTRGRSLRAKTHSLSSWKAGKGRRSAAGLR). Residues 195 to 206 (RKTRGRSLRAKT) show a composition bias toward basic residues.

The protein belongs to the krueppel C2H2-type zinc-finger protein family.

The protein resides in the nucleus. Its function is as follows. Binds DNA through the consensus sequence 5'-CAATG-3'. May be involved in transcriptional regulation and may play a role in tooth formation. This chain is Zinc finger protein 22 (ZNF22), found in Bos taurus (Bovine).